The sequence spans 212 residues: Pyrrolidone-carboxylate peptidase (212 aa).

Active-site residues include glutamate 78, cysteine 141, and histidine 165.

It belongs to the peptidase C15 family. Homotetramer.

Its subcellular location is the cytoplasm. It carries out the reaction Release of an N-terminal pyroglutamyl group from a polypeptide, the second amino acid generally not being Pro.. Its function is as follows. Removes 5-oxoproline from various penultimate amino acid residues except L-proline. This chain is Pyrrolidone-carboxylate peptidase, found in Staphylococcus haemolyticus (strain JCSC1435).